Reading from the N-terminus, the 558-residue chain is Membrane protein insertase YidC (558 aa).

The next 6 helical transmembrane spans lie at 5-25 (IINL…WQYF), 332-352 (AIDF…MNFF), 355-375 (YVGN…LLMF), 429-449 (LPIL…YVTI), 474-494 (LFGL…WPIL), and 520-540 (FMPL…LIYW).

Belongs to the OXA1/ALB3/YidC family. Type 1 subfamily. In terms of assembly, interacts with the Sec translocase complex via SecD. Specifically interacts with transmembrane segments of nascent integral membrane proteins during membrane integration.

The protein localises to the cell inner membrane. Required for the insertion and/or proper folding and/or complex formation of integral membrane proteins into the membrane. Involved in integration of membrane proteins that insert both dependently and independently of the Sec translocase complex, as well as at least some lipoproteins. Aids folding of multispanning membrane proteins. The protein is Membrane protein insertase YidC of Rickettsia typhi (strain ATCC VR-144 / Wilmington).